The primary structure comprises 201 residues: 3-isopropylmalate dehydratase small subunit (201 aa).

Belongs to the LeuD family. LeuD type 1 subfamily. In terms of assembly, heterodimer of LeuC and LeuD.

The catalysed reaction is (2R,3S)-3-isopropylmalate = (2S)-2-isopropylmalate. Its pathway is amino-acid biosynthesis; L-leucine biosynthesis; L-leucine from 3-methyl-2-oxobutanoate: step 2/4. Catalyzes the isomerization between 2-isopropylmalate and 3-isopropylmalate, via the formation of 2-isopropylmaleate. In Escherichia coli O9:H4 (strain HS), this protein is 3-isopropylmalate dehydratase small subunit.